Here is a 567-residue protein sequence, read N- to C-terminus: Phenylalanine ammonia-lyase (567 aa).

The active-site Proton donor/acceptor is the Tyr78. The segment at residues 167-169 (ASG) is a cross-link (5-imidazolinone (Ala-Gly)). Ser168 carries the post-translational modification 2,3-didehydroalanine (Ser). 7 residues coordinate (E)-cinnamate: Asn223, Gln311, Arg317, Asn347, Lys419, Glu448, and Asn451.

This sequence belongs to the PAL/histidase family. As to quaternary structure, homotetramer. Post-translationally, contains an active site 4-methylidene-imidazol-5-one (MIO), which is formed autocatalytically by cyclization and dehydration of residues Ala-Ser-Gly.

It localises to the cytoplasm. The catalysed reaction is L-phenylalanine = (E)-cinnamate + NH4(+). It participates in phenylpropanoid metabolism; trans-cinnamate biosynthesis; trans-cinnamate from L-phenylalanine: step 1/1. In terms of biological role, catalyzes the non-oxidative deamination of L-phenylalanine to form trans-cinnamic acid, the first step in the phenylpropanoid pathway. In Trichormus variabilis (strain ATCC 29413 / PCC 7937) (Anabaena variabilis), this protein is Phenylalanine ammonia-lyase.